A 249-amino-acid polypeptide reads, in one-letter code: Pleckstrin homology domain-containing family F member 2 (249 aa).

S16 carries the post-translational modification Phosphoserine. One can recognise a PH domain in the interval V35 to T131. The residue at position 44 (K44) is an N6-acetyllysine. The segment at D152–S212 adopts an FYVE-type zinc-finger fold. Zn(2+)-binding residues include C158, C161, C175, C178, C183, C186, C204, and C207. Residues P221 to S233 are compositionally biased toward polar residues. The interval P221 to D249 is disordered. Positions M238 to D249 are enriched in acidic residues. Residues S239 and S248 each carry the phosphoserine modification.

In terms of assembly, may interact with EEA1. Expressed in placenta, ovary and small intestine, as well as in heart and pancreas. Also expressed in peripheral blood mononuclear cells and dendritic cells.

It localises to the early endosome membrane. The protein localises to the endoplasmic reticulum. Its function is as follows. May play a role in early endosome fusion upstream of RAB5, hence regulating receptor trafficking and fluid-phase transport. Enhances cellular sensitivity to TNF-induced apoptosis. This chain is Pleckstrin homology domain-containing family F member 2 (PLEKHF2), found in Homo sapiens (Human).